The primary structure comprises 257 residues: Imidazole glycerol phosphate synthase subunit HisF (257 aa).

Catalysis depends on residues aspartate 11 and aspartate 130.

Belongs to the HisA/HisF family. In terms of assembly, heterodimer of HisH and HisF.

The protein localises to the cytoplasm. It catalyses the reaction 5-[(5-phospho-1-deoxy-D-ribulos-1-ylimino)methylamino]-1-(5-phospho-beta-D-ribosyl)imidazole-4-carboxamide + L-glutamine = D-erythro-1-(imidazol-4-yl)glycerol 3-phosphate + 5-amino-1-(5-phospho-beta-D-ribosyl)imidazole-4-carboxamide + L-glutamate + H(+). It functions in the pathway amino-acid biosynthesis; L-histidine biosynthesis; L-histidine from 5-phospho-alpha-D-ribose 1-diphosphate: step 5/9. IGPS catalyzes the conversion of PRFAR and glutamine to IGP, AICAR and glutamate. The HisF subunit catalyzes the cyclization activity that produces IGP and AICAR from PRFAR using the ammonia provided by the HisH subunit. The polypeptide is Imidazole glycerol phosphate synthase subunit HisF (Shewanella denitrificans (strain OS217 / ATCC BAA-1090 / DSM 15013)).